The chain runs to 446 residues: Bifunctional protein GlmU (446 aa).

Positions 1–229 are pyrophosphorylase; sequence MTEKPVALIV…EAETLGINTR (229 aa). Residues 11 to 14, Lys-25, Gln-78, 83 to 84, 106 to 108, Gly-141, Glu-155, Asn-170, and Asn-227 each bind UDP-N-acetyl-alpha-D-glucosamine; these read LAAG, GT, and YGD. Asp-108 lines the Mg(2+) pocket. Asn-227 contributes to the Mg(2+) binding site. Residues 230 to 250 are linker; it reads AELAAAEAAFQVRARARALED. Positions 251 to 446 are N-acetyltransferase; sequence GVTMTDPATV…MQALRQKKGN (196 aa). The UDP-N-acetyl-alpha-D-glucosamine site is built by Arg-316 and Lys-334. His-346 functions as the Proton acceptor in the catalytic mechanism. The UDP-N-acetyl-alpha-D-glucosamine site is built by Tyr-349 and Asn-360. Acetyl-CoA-binding positions include Ala-363, 369–370, Ser-388, Ser-406, and Arg-423; that span reads NY.

In the N-terminal section; belongs to the N-acetylglucosamine-1-phosphate uridyltransferase family. It in the C-terminal section; belongs to the transferase hexapeptide repeat family. As to quaternary structure, homotrimer. It depends on Mg(2+) as a cofactor.

It localises to the cytoplasm. The catalysed reaction is alpha-D-glucosamine 1-phosphate + acetyl-CoA = N-acetyl-alpha-D-glucosamine 1-phosphate + CoA + H(+). It catalyses the reaction N-acetyl-alpha-D-glucosamine 1-phosphate + UTP + H(+) = UDP-N-acetyl-alpha-D-glucosamine + diphosphate. It functions in the pathway nucleotide-sugar biosynthesis; UDP-N-acetyl-alpha-D-glucosamine biosynthesis; N-acetyl-alpha-D-glucosamine 1-phosphate from alpha-D-glucosamine 6-phosphate (route II): step 2/2. Its pathway is nucleotide-sugar biosynthesis; UDP-N-acetyl-alpha-D-glucosamine biosynthesis; UDP-N-acetyl-alpha-D-glucosamine from N-acetyl-alpha-D-glucosamine 1-phosphate: step 1/1. It participates in bacterial outer membrane biogenesis; LPS lipid A biosynthesis. Functionally, catalyzes the last two sequential reactions in the de novo biosynthetic pathway for UDP-N-acetylglucosamine (UDP-GlcNAc). The C-terminal domain catalyzes the transfer of acetyl group from acetyl coenzyme A to glucosamine-1-phosphate (GlcN-1-P) to produce N-acetylglucosamine-1-phosphate (GlcNAc-1-P), which is converted into UDP-GlcNAc by the transfer of uridine 5-monophosphate (from uridine 5-triphosphate), a reaction catalyzed by the N-terminal domain. The sequence is that of Bifunctional protein GlmU from Paracoccus denitrificans (strain Pd 1222).